Consider the following 425-residue polypeptide: Kynureninase (425 aa).

Pyridoxal 5'-phosphate contacts are provided by residues leucine 105, threonine 106, 133-136 (FPSD), aspartate 218, histidine 221, and tyrosine 243. Lysine 244 is modified (N6-(pyridoxal phosphate)lysine). Residues tryptophan 274 and asparagine 302 each coordinate pyridoxal 5'-phosphate.

It belongs to the kynureninase family. As to quaternary structure, homodimer. Pyridoxal 5'-phosphate is required as a cofactor.

It carries out the reaction L-kynurenine + H2O = anthranilate + L-alanine + H(+). The enzyme catalyses 3-hydroxy-L-kynurenine + H2O = 3-hydroxyanthranilate + L-alanine + H(+). It participates in amino-acid degradation; L-kynurenine degradation; L-alanine and anthranilate from L-kynurenine: step 1/1. The protein operates within cofactor biosynthesis; NAD(+) biosynthesis; quinolinate from L-kynurenine: step 2/3. Its function is as follows. Catalyzes the cleavage of L-kynurenine (L-Kyn) and L-3-hydroxykynurenine (L-3OHKyn) into anthranilic acid (AA) and 3-hydroxyanthranilic acid (3-OHAA), respectively. This chain is Kynureninase, found in Flavobacterium psychrophilum (strain ATCC 49511 / DSM 21280 / CIP 103535 / JIP02/86).